The primary structure comprises 586 residues: Arginine--tRNA ligase (586 aa).

Positions 131–141 (ANPTGPMHVGH) match the 'HIGH' region motif.

The protein belongs to the class-I aminoacyl-tRNA synthetase family. Monomer.

Its subcellular location is the cytoplasm. The catalysed reaction is tRNA(Arg) + L-arginine + ATP = L-arginyl-tRNA(Arg) + AMP + diphosphate. The chain is Arginine--tRNA ligase from Azorhizobium caulinodans (strain ATCC 43989 / DSM 5975 / JCM 20966 / LMG 6465 / NBRC 14845 / NCIMB 13405 / ORS 571).